Here is a 570-residue protein sequence, read N- to C-terminus: Sulfite reductase [NADPH] hemoprotein beta-component (570 aa).

Cys434, Cys440, Cys479, and Cys483 together coordinate [4Fe-4S] cluster. Residue Cys483 coordinates siroheme.

The protein belongs to the nitrite and sulfite reductase 4Fe-4S domain family. Alpha(8)-beta(8). The alpha component is a flavoprotein, the beta component is a hemoprotein. It depends on siroheme as a cofactor. Requires [4Fe-4S] cluster as cofactor.

It carries out the reaction hydrogen sulfide + 3 NADP(+) + 3 H2O = sulfite + 3 NADPH + 4 H(+). It participates in sulfur metabolism; hydrogen sulfide biosynthesis; hydrogen sulfide from sulfite (NADPH route): step 1/1. Functionally, component of the sulfite reductase complex that catalyzes the 6-electron reduction of sulfite to sulfide. This is one of several activities required for the biosynthesis of L-cysteine from sulfate. The protein is Sulfite reductase [NADPH] hemoprotein beta-component of Salmonella dublin (strain CT_02021853).